The sequence spans 448 residues: Putative diacyglycerol O-acyltransferase MT3848 (448 aa).

H136 (proton acceptor) is an active-site residue.

The protein belongs to the long-chain O-acyltransferase family.

The enzyme catalyses an acyl-CoA + a 1,2-diacyl-sn-glycerol = a triacyl-sn-glycerol + CoA. It participates in glycerolipid metabolism; triacylglycerol biosynthesis. The protein is Putative diacyglycerol O-acyltransferase MT3848 of Mycobacterium tuberculosis (strain CDC 1551 / Oshkosh).